Consider the following 310-residue polypeptide: Zinc finger protein unc-98 (310 aa).

Polar residues predominate over residues 73 to 84 (GSSSAQTPTKSS). The segment at 73–102 (GSSSAQTPTKSSGGALDGSDQQEVRQDGTS) is disordered. 2 consecutive C2H2-type zinc fingers follow at residues 113 to 135 (YKCR…ERIH) and 141 to 163 (YVCG…AAQH). The segment at 169 to 188 (YKCECGRTFFSYTEMLYHKH) adopts a C2H2-type 3; degenerate zinc-finger fold. The segment at 198–310 (APETTTIKVS…RTSGYVTPRF (113 aa)) is interaction with myo-3. The C2H2-type 4 zinc-finger motif lies at 246-268 (YICEYCSKSYSDSRGLAYHMYSH).

In terms of assembly, interacts with hum-6, mep-1, myo-3, unc-96 and unc-97/PINCH. As to expression, expressed in embryos from 1.5- to 2-fold stage in myofibrils. In larvae and adults, it is expressed in body wall muscle, and in addition, anal depressor muscle and vulval muscles. More specifically it is found in the thick filaments of muscle fibers.

It is found in the nucleus. The protein resides in the cytoplasm. Probable transcription factor required for muscle structure. Its dual subcellular localization suggests that it may function both as a muscle adhesion complex protein and as a transcription factor, or work together with transcription factors, to influence gene expression. Thought to act as a molecular bridge between unc-97 and myo-3 at the M-line of muscles, possibly in a signaling role. Plays a role in the formation of muscle connections, also called muscle arm extensions, between the body wall and the motor axons in the dorsal and ventral cord. This is Zinc finger protein unc-98 (unc-98) from Caenorhabditis elegans.